The following is a 577-amino-acid chain: Urease subunit alpha (577 aa).

Residues 136–577 form the Urease domain; it reads GAIDCHVHLI…LPMAQRYFLF (442 aa). 3 residues coordinate Ni(2+): His141, His143, and Lys224. N6-carboxylysine is present on Lys224. Substrate is bound at residue His226. 2 residues coordinate Ni(2+): His253 and His279. The Proton donor role is filled by His327. Asp367 is a binding site for Ni(2+).

It belongs to the metallo-dependent hydrolases superfamily. Urease alpha subunit family. Heterotrimer of UreA (gamma), UreB (beta) and UreC (alpha) subunits. Three heterotrimers associate to form the active enzyme. It depends on Ni cation as a cofactor. In terms of processing, carboxylation allows a single lysine to coordinate two nickel ions.

It is found in the cytoplasm. It carries out the reaction urea + 2 H2O + H(+) = hydrogencarbonate + 2 NH4(+). The protein operates within nitrogen metabolism; urea degradation; CO(2) and NH(3) from urea (urease route): step 1/1. This chain is Urease subunit alpha, found in Mycobacterium marinum (strain ATCC BAA-535 / M).